The chain runs to 192 residues: Thymidine kinase (192 aa).

ATP-binding positions include 9-16 (SAMNAGKS) and 87-90 (DECQ). The active-site Proton acceptor is the E88. C145, C147, C182, and H185 together coordinate Zn(2+).

It belongs to the thymidine kinase family. Homotetramer.

The protein localises to the cytoplasm. It carries out the reaction thymidine + ATP = dTMP + ADP + H(+). In Aliivibrio fischeri (strain ATCC 700601 / ES114) (Vibrio fischeri), this protein is Thymidine kinase.